The chain runs to 338 residues: Aspartate--ammonia ligase (338 aa).

The protein belongs to the class-II aminoacyl-tRNA synthetase family. AsnA subfamily.

The protein localises to the cytoplasm. The catalysed reaction is L-aspartate + NH4(+) + ATP = L-asparagine + AMP + diphosphate + H(+). The protein operates within amino-acid biosynthesis; L-asparagine biosynthesis; L-asparagine from L-aspartate (ammonia route): step 1/1. This Lactobacillus delbrueckii subsp. bulgaricus (strain ATCC 11842 / DSM 20081 / BCRC 10696 / JCM 1002 / NBRC 13953 / NCIMB 11778 / NCTC 12712 / WDCM 00102 / Lb 14) protein is Aspartate--ammonia ligase.